The following is a 332-amino-acid chain: Geranylgeranyl pyrophosphate synthase 2 (332 aa).

3 residues coordinate isopentenyl diphosphate: lysine 55, arginine 58, and histidine 87. Mg(2+) contacts are provided by aspartate 94 and aspartate 98. Arginine 103 lines the dimethylallyl diphosphate pocket. Isopentenyl diphosphate is bound at residue arginine 104. Dimethylallyl diphosphate contacts are provided by lysine 181, threonine 182, and glutamine 218. Aspartate 221 is a binding site for Mg(2+). Asparagine 225, lysine 235, and lysine 245 together coordinate dimethylallyl diphosphate.

Belongs to the FPP/GGPP synthase family. The cofactor is Mg(2+).

It carries out the reaction isopentenyl diphosphate + dimethylallyl diphosphate = (2E)-geranyl diphosphate + diphosphate. It catalyses the reaction isopentenyl diphosphate + (2E)-geranyl diphosphate = (2E,6E)-farnesyl diphosphate + diphosphate. The catalysed reaction is isopentenyl diphosphate + (2E,6E)-farnesyl diphosphate = (2E,6E,10E)-geranylgeranyl diphosphate + diphosphate. Geranylgeranyl pyrophosphate synthase; part of the gene cluster 3 that mediates the biosynthesis of an isoprenoid secondary metabolite. The sequence is that of Geranylgeranyl pyrophosphate synthase 2 (GGS2) from Zymoseptoria tritici (strain CBS 115943 / IPO323) (Speckled leaf blotch fungus).